The sequence spans 587 residues: Cyclic GMP-AMP synthase-like receptor (587 aa).

Disordered regions lie at residues 26-48 and 77-229; these read IHPS…RRDD and TRMH…DRPL. 3 stretches are compositionally biased toward basic and acidic residues: residues 95–138, 150–185, and 204–228; these read TRDR…RDSL, DGAR…RESL, and PESR…HDRP. Residues Glu307, Asp309, and Asp409 each contribute to the Mg(2+) site.

It belongs to the mab-21 family. Mg(2+) is required as a cofactor. It depends on Mn(2+) as a cofactor.

It catalyses the reaction UTP + ATP = 2',3'-cUAMP + 2 diphosphate. Its function is as follows. Nucleotidyltransferase that catalyzes the formation of cyclic UMP-AMP (2',3'-cUAMP) from ATP and UTP and plays a key role in innate immunity. Acts as a key sensor of double-stranded DNA (dsDNA), the presence of dsDNA in the cytoplasm being a danger signal that triggers the immune responses. Directly binds dsDNA, activating the nucleotidyltransferase activity, leading to synthesis of 2',3'-cUAMP, a second messenger that binds to and activates Sting, thereby triggering the immune response via activation of the NF-kappa-B transcription factor. The sequence is that of Cyclic GMP-AMP synthase-like receptor from Magallana gigas (Pacific oyster).